A 205-amino-acid chain; its full sequence is Ephrin-A1 (205 aa).

Residues M1 to A18 form the signal peptide. One can recognise an Ephrin RBD domain in the interval D19–I151. The N-linked (GlcNAc...) asparagine glycan is linked to N26. Disulfide bonds link C51/C92 and C80/C140. S182 carries the GPI-anchor amidated serine lipid modification. The propeptide at A183 to S205 is removed in mature form.

It belongs to the ephrin family. Monomer. Homodimer. Forms heterodimers with EPHA2. Binds to the receptor tyrosine kinases EPHA2, EPHA3, EPHA4, EPHA5, EPHA6 and EPHA7. Also binds with low affinity to EPHA1. Post-translationally, undergoes proteolysis by a metalloprotease to give rise to a soluble monomeric form. In terms of processing, N-Glycosylation is required for binding to EPHA2 receptor and inducing its internalization.

It is found in the cell membrane. The protein localises to the secreted. Functionally, cell surface GPI-bound ligand for Eph receptors, a family of receptor tyrosine kinases which are crucial for migration, repulsion and adhesion during neuronal, vascular and epithelial development. Binds promiscuously Eph receptors residing on adjacent cells, leading to contact-dependent bidirectional signaling into neighboring cells. Plays an important role in angiogenesis and tumor neovascularization. The recruitment of VAV2, VAV3 and PI3-kinase p85 subunit by phosphorylated EPHA2 is critical for EFNA1-induced RAC1 GTPase activation and vascular endothelial cell migration and assembly. Exerts anti-oncogenic effects in tumor cells through activation and down-regulation of EPHA2. Activates EPHA2 by inducing tyrosine phosphorylation which leads to its internalization and degradation. Acts as a negative regulator in the tumorigenesis of gliomas by down-regulating EPHA2 and FAK. Can evoke collapse of embryonic neuronal growth cone and regulates dendritic spine morphogenesis. This Sus scrofa (Pig) protein is Ephrin-A1 (EFNA1).